Consider the following 247-residue polypeptide: Ubiquinone biosynthesis O-methyltransferase (247 aa).

Residues arginine 45, glycine 65, aspartate 86, and leucine 130 each contribute to the S-adenosyl-L-methionine site.

Belongs to the methyltransferase superfamily. UbiG/COQ3 family.

The catalysed reaction is a 3-demethylubiquinol + S-adenosyl-L-methionine = a ubiquinol + S-adenosyl-L-homocysteine + H(+). The enzyme catalyses a 3-(all-trans-polyprenyl)benzene-1,2-diol + S-adenosyl-L-methionine = a 2-methoxy-6-(all-trans-polyprenyl)phenol + S-adenosyl-L-homocysteine + H(+). It functions in the pathway cofactor biosynthesis; ubiquinone biosynthesis. O-methyltransferase that catalyzes the 2 O-methylation steps in the ubiquinone biosynthetic pathway. The sequence is that of Ubiquinone biosynthesis O-methyltransferase from Alkalilimnicola ehrlichii (strain ATCC BAA-1101 / DSM 17681 / MLHE-1).